A 30-amino-acid polypeptide reads, in one-letter code: Conopeptide Vi002 (30 aa).

As to expression, expressed by the venom gland.

The protein resides in the secreted. The polypeptide is Conopeptide Vi002 (Conus virgo (Virgin cone)).